A 756-amino-acid chain; its full sequence is Zinc finger and BTB domain-containing protein 49 (756 aa).

In terms of domain architecture, BTB spans 25 to 91 (CDCMLVVRGV…MYTSRLDLNQ (67 aa)). Disordered regions lie at residues 176-197 (APSANFSRPTEVSKPDAAGGSC), 226-290 (PSQV…LSEP), and 311-379 (SQQS…PSQA). Polar residues predominate over residues 226 to 242 (PSQVPATQQPLTRSAST). 2 stretches are compositionally biased toward basic and acidic residues: residues 319–341 (SHPEPDNGLARREESAAKEDAVE) and 348–365 (AEEKGRGELGPESSREEE). 7 consecutive C2H2-type zinc fingers follow at residues 386 to 408 (YACELCGKPFKHPSNLELHKRSH), 414 to 436 (FECNICGKHFSQAGNLQTHLRRH), 442 to 464 (YICEICGKRFAASGDVQRHIIIH), 470 to 492 (HLCDTCGRGFSNFSNLKEHKKTH), 498 to 520 (FTCDECGKSFNMQRKLVKHRVRH), 526 to 548 (YSCPACGKCFGGSGDLRRHVRTH), and 554 to 576 (YSCEVCSKCFTRSAVLRRHKRMH).

The protein belongs to the krueppel C2H2-type zinc-finger protein family. As to quaternary structure, interacts with EP300, KAT5/Tip60 and ZBTB17. The interaction with EP300 is direct and leads to synergistic induction of CDKN1A. On the CDKN1A promoter, forms a complex with ZBTB17; this interaction leads to additive CDKN1A transactivation. The interaction with ZBTB17 may block ZBTB17 repressor activity. Widely expressed, with highest levels in white adipose tissue and kidney, intermediate levels in brain, liver and heart, and lowest levels in spleen, brown adipose tissue and muscle.

The protein resides in the cytoplasm. Its subcellular location is the nucleus. Functionally, transcription factor. Inhibits cell proliferation by activating either CDKN1A/p21 transcription or RB1 transcription. The protein is Zinc finger and BTB domain-containing protein 49 (Zbtb49) of Mus musculus (Mouse).